A 454-amino-acid chain; its full sequence is Light-independent protochlorophyllide reductase subunit N (454 aa).

[4Fe-4S] cluster contacts are provided by Cys22, Cys47, and Cys107.

This sequence belongs to the BchN/ChlN family. As to quaternary structure, protochlorophyllide reductase is composed of three subunits; ChlL, ChlN and ChlB. Forms a heterotetramer of two ChlB and two ChlN subunits. It depends on [4Fe-4S] cluster as a cofactor.

Its subcellular location is the plastid. The protein resides in the chloroplast. It catalyses the reaction chlorophyllide a + oxidized 2[4Fe-4S]-[ferredoxin] + 2 ADP + 2 phosphate = protochlorophyllide a + reduced 2[4Fe-4S]-[ferredoxin] + 2 ATP + 2 H2O. It participates in porphyrin-containing compound metabolism; chlorophyll biosynthesis (light-independent). Functionally, component of the dark-operative protochlorophyllide reductase (DPOR) that uses Mg-ATP and reduced ferredoxin to reduce ring D of protochlorophyllide (Pchlide) to form chlorophyllide a (Chlide). This reaction is light-independent. The NB-protein (ChlN-ChlB) is the catalytic component of the complex. This is Light-independent protochlorophyllide reductase subunit N from Cycas taitungensis (Prince sago).